Reading from the N-terminus, the 315-residue chain is T-box transcription factor tbx-8 (315 aa).

Residues 11 to 195 (EDQDKLWNLF…FNPFAKGFRE (185 aa)) constitute a DNA-binding region (T-box). Basic and acidic residues predominate over residues 193–203 (FREGSQSDRKR). 2 disordered regions span residues 193–235 (FREG…SVSP) and 293–315 (PPPS…INVV). A compositionally biased stretch (low complexity) spans 205-225 (SPSADDSTTDESSSQVSSPQP). Residues 305 to 315 (QEDIEQEINVV) show a composition bias toward acidic residues.

The protein resides in the nucleus. Functionally, transcription factor. Involved in the control of early morphogenesis of the intestine, hypodermis and body-wall muscle. Involved in regulating expression of vab-7. Appears to have partially redundant function to tbx-9. In Caenorhabditis elegans, this protein is T-box transcription factor tbx-8 (tbx-8).